A 457-amino-acid polypeptide reads, in one-letter code: ATP synthase subunit beta (457 aa).

150 to 157 (GGAGVGKT) serves as a coordination point for ATP.

Belongs to the ATPase alpha/beta chains family. As to quaternary structure, F-type ATPases have 2 components, CF(1) - the catalytic core - and CF(0) - the membrane proton channel. CF(1) has five subunits: alpha(3), beta(3), gamma(1), delta(1), epsilon(1). CF(0) has three main subunits: a(1), b(2) and c(9-12). The alpha and beta chains form an alternating ring which encloses part of the gamma chain. CF(1) is attached to CF(0) by a central stalk formed by the gamma and epsilon chains, while a peripheral stalk is formed by the delta and b chains.

It is found in the cell membrane. The catalysed reaction is ATP + H2O + 4 H(+)(in) = ADP + phosphate + 5 H(+)(out). Functionally, produces ATP from ADP in the presence of a proton gradient across the membrane. The catalytic sites are hosted primarily by the beta subunits. This chain is ATP synthase subunit beta, found in Baumannia cicadellinicola subsp. Homalodisca coagulata.